Consider the following 437-residue polypeptide: Ribulose bisphosphate carboxylase/oxygenase activase, chloroplastic (437 aa).

Over residues 1–10 (MATAVSTIGS) the composition is skewed to polar residues. The segment at 1-26 (MATAVSTIGSVNRAPPNLNGSSSSAS) is disordered. Residue 165-172 (GGKGQGKS) coordinates ATP.

This sequence belongs to the RuBisCO activase family.

It localises to the plastid. Its subcellular location is the chloroplast stroma. In terms of biological role, activation of RuBisCO (ribulose-1,5-bisphosphate carboxylase/oxygenase; EC 4.1.1.39) involves the ATP-dependent carboxylation of the epsilon-amino group of lysine leading to a carbamate structure. This chain is Ribulose bisphosphate carboxylase/oxygenase activase, chloroplastic (RCA), found in Malus domestica (Apple).